We begin with the raw amino-acid sequence, 95 residues long: Osteocalcin-related protein (95 aa).

The signal sequence occupies residues 1-23 (MRTLSLLTLLALAALCLSDLTDA). Residues 24–49 (TPTGPESDKAFMSKQEGNKVVNRLRR) constitute a propeptide that is removed on maturation. Residues 46–92 (RLRRYLGASVPSPDPLEPTRELCELDPACDELSNQYGLKTAYRRIYG) enclose the Gla domain. Residues glutamate 62, glutamate 66, glutamate 69, and aspartate 75 each coordinate Ca(2+). Residues glutamate 66 and glutamate 69 each carry the 4-carboxyglutamate modification. A disulfide bond links cysteine 68 and cysteine 74.

The protein belongs to the osteocalcin/matrix Gla protein family. Post-translationally, gamma-carboxyglutamic acid residues are formed by vitamin K dependent carboxylation. These residues are essential for the binding of calcium. Expressed in kidney and lung, but not in bone.

It localises to the secreted. Its function is as follows. Binds strongly to apatite and calcium. The chain is Osteocalcin-related protein from Mus musculus (Mouse).